A 236-amino-acid chain; its full sequence is Orotidine 5'-phosphate decarboxylase (236 aa).

Residues D11, K33, 60 to 69 (DLKLHDIPNT), T119, R181, Q190, G210, and R211 each bind substrate. Residue K62 is the Proton donor of the active site.

This sequence belongs to the OMP decarboxylase family. Type 1 subfamily. As to quaternary structure, homodimer.

It catalyses the reaction orotidine 5'-phosphate + H(+) = UMP + CO2. It functions in the pathway pyrimidine metabolism; UMP biosynthesis via de novo pathway; UMP from orotate: step 2/2. Functionally, catalyzes the decarboxylation of orotidine 5'-monophosphate (OMP) to uridine 5'-monophosphate (UMP). This Cutibacterium acnes (strain DSM 16379 / KPA171202) (Propionibacterium acnes) protein is Orotidine 5'-phosphate decarboxylase.